Consider the following 284-residue polypeptide: RNase adapter protein RapZ (284 aa).

ATP is bound at residue 8–15 (GRSGSGKS). 56 to 59 (DVRN) contacts GTP. An RNA-binding region spans residues 266-284 (RSRGKNVQLRHRTLEKRKE).

It belongs to the RapZ-like family. RapZ subfamily. In terms of assembly, homotrimer.

Modulates the synthesis of GlmS, by affecting the processing and stability of the regulatory small RNA GlmZ. When glucosamine-6-phosphate (GlcN6P) concentrations are high in the cell, RapZ binds GlmZ and targets it to cleavage by RNase E. Consequently, GlmZ is inactivated and unable to activate GlmS synthesis. Under low GlcN6P concentrations, RapZ is sequestered and inactivated by an other regulatory small RNA, GlmY, preventing GlmZ degradation and leading to synthesis of GlmS. The sequence is that of RNase adapter protein RapZ from Hamiltonella defensa subsp. Acyrthosiphon pisum (strain 5AT).